The sequence spans 154 residues: Large ribosomal subunit protein uL13 (154 aa).

Belongs to the universal ribosomal protein uL13 family. In terms of assembly, part of the 50S ribosomal subunit.

In terms of biological role, this protein is one of the early assembly proteins of the 50S ribosomal subunit, although it is not seen to bind rRNA by itself. It is important during the early stages of 50S assembly. This Bartonella quintana (strain Toulouse) (Rochalimaea quintana) protein is Large ribosomal subunit protein uL13.